Reading from the N-terminus, the 355-residue chain is Chromosomal protein D1 (355 aa).

M1 carries the N-acetylmethionine modification. A disordered region spans residues 1–355 (MEEVAVKKRG…NYNDSESVAA (355 aa)). The segment at residues 7–14 (KKRGRPSK) is a DNA-binding region (a.T hook 1). S30 is subject to Phosphoserine. DNA-binding regions (a.T hook) lie at residues 34 to 41 (KKRGRPAK) and 60 to 67 (KIQNDEDP). A compositionally biased stretch (acidic residues) spans 64-77 (DEDPEDEGEEDGDG). Residues S80, S88, and S89 each carry the phosphoserine modification. The segment at residues 94–101 (KGRGRPKS) is a DNA-binding region (a.T hook 4). S107, S109, and S112 each carry phosphoserine. The residue at position 115 (T115) is a Phosphothreonine. Position 118 is a phosphoserine (S118). Positions 119-130 (AKKRKAGRPKKH) are enriched in basic residues. The segment at residues 122 to 129 (RKAGRPKK) is a DNA-binding region (a.T hook 5). Phosphoserine; by CK2 is present on residues S133 and S135. Residues 135-147 (SENEDDQDEDDDG) show a composition bias toward acidic residues. S149, S150, S161, S164, and S170 each carry phosphoserine. The a.T hook 6 DNA-binding region spans 155–162 (RPVGRPSA). The a.T hook 7 DNA-binding region spans 174 to 181 (RGLGRPKK). At S186 the chain carries Phosphoserine; by CK2. A DNA-binding region (a.T hook 8) is located at residues 196-203 (KKRGRPPQ). A Phosphoserine modification is found at S208. Positions 219 to 226 (RPRGRPKA) form a DNA-binding region, a.T hook 9. Positions 237 to 247 (NDDDQDDENSG) are enriched in acidic residues. Residues S246, S252, and S253 each carry the phosphoserine modification. 2 DNA-binding regions (a.T hook) span residues 262–269 (KKRGRPSL) and 281–288 (KPRSRPAK). Residues S299 and S307 each carry the phosphoserine modification. Residues 307–318 (SKKESNDEDRAV) are compositionally biased toward basic and acidic residues. At S311 the chain carries Phosphoserine; by CK2. Phosphothreonine is present on T321. Position 332 is a phosphoserine; by CK2 (S332). Over residues 345 to 355 (DNYNDSESVAA) the composition is skewed to polar residues.

The protein resides in the nucleus. It is found in the chromosome. This satellite DNA-associated protein is a double-stranded DNA binding protein specific for tracts of pure at DNA. It may play a role in organizing the higher-order structure of euchromatin as well as heterochromatin. In Drosophila melanogaster (Fruit fly), this protein is Chromosomal protein D1 (D1).